We begin with the raw amino-acid sequence, 217 residues long: NAD(P)H-hydrate epimerase (217 aa).

One can recognise a YjeF N-terminal domain in the interval 1 to 217; it reads MRAIENAAMA…VAVADIGLSS (217 aa). 48-52 is a (6S)-NADPHX binding site; the sequence is NNGGD. K(+) contacts are provided by N49 and D127. (6S)-NADPHX-binding positions include 131–137 and D165; that span reads GIGQTRP. Position 168 (T168) interacts with K(+).

Belongs to the NnrE/AIBP family. The cofactor is K(+).

It catalyses the reaction (6R)-NADHX = (6S)-NADHX. It carries out the reaction (6R)-NADPHX = (6S)-NADPHX. Its function is as follows. Catalyzes the epimerization of the S- and R-forms of NAD(P)HX, a damaged form of NAD(P)H that is a result of enzymatic or heat-dependent hydration. This is a prerequisite for the S-specific NAD(P)H-hydrate dehydratase to allow the repair of both epimers of NAD(P)HX. This is NAD(P)H-hydrate epimerase from Cereibacter sphaeroides (strain KD131 / KCTC 12085) (Rhodobacter sphaeroides).